We begin with the raw amino-acid sequence, 286 residues long: Probable aquaporin PIP-type pTOM75 (286 aa).

Residues methionine 1 to proline 35 are disordered. The Cytoplasmic portion of the chain corresponds to methionine 1–glycine 55. Basic and acidic residues predominate over residues glutamate 7–glutamate 18. The chain crosses the membrane as a helical span at residues isoleucine 56–leucine 76. The Extracellular segment spans residues lysine 77–glutamine 89. The helical transmembrane segment at glycine 90–serine 110 threads the bilayer. The Cytoplasmic segment spans residues glycine 111–alanine 133. Positions asparagine 115–alanine 117 match the NPA 1 motif. A helical membrane pass occupies residues valine 134 to phenylalanine 154. Residues methionine 155 to lysine 175 lie on the Extracellular side of the membrane. A helical membrane pass occupies residues glycine 176–alanine 196. Over threonine 197–proline 209 the chain is Cytoplasmic. The chain crosses the membrane as a helical span at residues isoleucine 210–isoleucine 230. Residues threonine 231–tryptophan 257 are Extracellular-facing. Positions asparagine 236–alanine 238 match the NPA 2 motif. A helical transmembrane segment spans residues isoleucine 258–isoleucine 278. The Cytoplasmic portion of the chain corresponds to arginine 279–serine 286.

This sequence belongs to the MIP/aquaporin (TC 1.A.8) family. PIP (TC 1.A.8.11) subfamily. Roots, ripening fruit and senescing leaves.

The protein localises to the cell membrane. In terms of biological role, aquaporins facilitate the transport of water and small neutral solutes across cell membranes. The protein is Probable aquaporin PIP-type pTOM75 of Solanum lycopersicum (Tomato).